Reading from the N-terminus, the 157-residue chain is 2-C-methyl-D-erythritol 2,4-cyclodiphosphate synthase (157 aa).

Residues D8 and H10 each contribute to the a divalent metal cation site. 4-CDP-2-C-methyl-D-erythritol 2-phosphate contacts are provided by residues 8–10 (DVH) and 34–35 (HS). H42 contacts a divalent metal cation. 4-CDP-2-C-methyl-D-erythritol 2-phosphate is bound by residues 56 to 58 (DIG), 61 to 65 (FPDTD), 132 to 135 (TTEE), and F139.

Belongs to the IspF family. As to quaternary structure, homotrimer. Requires a divalent metal cation as cofactor.

It carries out the reaction 4-CDP-2-C-methyl-D-erythritol 2-phosphate = 2-C-methyl-D-erythritol 2,4-cyclic diphosphate + CMP. The protein operates within isoprenoid biosynthesis; isopentenyl diphosphate biosynthesis via DXP pathway; isopentenyl diphosphate from 1-deoxy-D-xylulose 5-phosphate: step 4/6. In terms of biological role, involved in the biosynthesis of isopentenyl diphosphate (IPP) and dimethylallyl diphosphate (DMAPP), two major building blocks of isoprenoid compounds. Catalyzes the conversion of 4-diphosphocytidyl-2-C-methyl-D-erythritol 2-phosphate (CDP-ME2P) to 2-C-methyl-D-erythritol 2,4-cyclodiphosphate (ME-CPP) with a corresponding release of cytidine 5-monophosphate (CMP). In Clostridium botulinum (strain Eklund 17B / Type B), this protein is 2-C-methyl-D-erythritol 2,4-cyclodiphosphate synthase.